The sequence spans 286 residues: Gap junction alpha-6 protein (286 aa).

Residues 1-23 (MSDWSALHQLLEKVQPYSTAGGK) lie on the Cytoplasmic side of the membrane. A helical transmembrane segment spans residues 24–41 (VWIKVLFIFRILLLGTAI). The Extracellular segment spans residues 42–76 (ESAWSDEQFEFHCNTQQPGCENVCYDQAFPISHVR). Residues 77–99 (LWVLQVIFVSVPTLLHLAHVYYV) traverse the membrane as a helical segment. Topologically, residues 100–151 (IRQNEKLKKQEEEELKVAHFNGASGERRLQKHTGKHIKCGSKEHGNRKMRGR) are cytoplasmic. Residues 152-174 (LLLTYMASIFFKSVFEVAFLLIQ) form a helical membrane-spanning segment. Residues 175-209 (WYLYGFTLSAVYICEQSPCPHRVDCFLSRPTEKTI) lie on the Extracellular side of the membrane. A helical transmembrane segment spans residues 210–232 (FILFMLVVSMVSFVLNVIELFYV). The Cytoplasmic segment spans residues 233–286 (LFKAIKNHLGNEKEEVYCNPVELQKPSCVSSSAVLTTICSSDQVVPVGLSSFYM).

This sequence belongs to the connexin family. Alpha-type (group II) subfamily. In terms of assembly, a connexon is composed of a hexamer of connexins. In terms of tissue distribution, expressed in testis.

Its subcellular location is the cell membrane. It localises to the cell junction. The protein resides in the gap junction. Its function is as follows. One gap junction consists of a cluster of closely packed pairs of transmembrane channels, the connexons, through which materials of low MW diffuse from one cell to a neighboring cell. The protein is Gap junction alpha-6 protein (Gja6) of Rattus norvegicus (Rat).